The sequence spans 319 residues: Glutamyl-Q tRNA(Asp) synthetase (319 aa).

L-glutamate contacts are provided by residues arginine 23–serine 27 and glutamate 59. Residues proline 26–serine 36 carry the 'HIGH' region motif. Residues cysteine 115, cysteine 117, tyrosine 139, and cysteine 143 each contribute to the Zn(2+) site. Residues tyrosine 197 and arginine 215 each contribute to the L-glutamate site. The 'KMSKS' region signature appears at lysine 254–glutamine 258. Lysine 257 lines the ATP pocket.

This sequence belongs to the class-I aminoacyl-tRNA synthetase family. GluQ subfamily. Zn(2+) serves as cofactor.

Functionally, catalyzes the tRNA-independent activation of glutamate in presence of ATP and the subsequent transfer of glutamate onto a tRNA(Asp). Glutamate is transferred on the 2-amino-5-(4,5-dihydroxy-2-cyclopenten-1-yl) moiety of the queuosine in the wobble position of the QUC anticodon. In Bordetella bronchiseptica (strain ATCC BAA-588 / NCTC 13252 / RB50) (Alcaligenes bronchisepticus), this protein is Glutamyl-Q tRNA(Asp) synthetase.